Consider the following 179-residue polypeptide: Large ribosomal subunit protein uL6 (179 aa).

It belongs to the universal ribosomal protein uL6 family. In terms of assembly, part of the 50S ribosomal subunit.

Its function is as follows. This protein binds to the 23S rRNA, and is important in its secondary structure. It is located near the subunit interface in the base of the L7/L12 stalk, and near the tRNA binding site of the peptidyltransferase center. The protein is Large ribosomal subunit protein uL6 of Chlorobaculum tepidum (strain ATCC 49652 / DSM 12025 / NBRC 103806 / TLS) (Chlorobium tepidum).